Consider the following 61-residue polypeptide: Small ribosomal subunit protein uS14 (61 aa).

Residues cysteine 24, cysteine 27, cysteine 40, and cysteine 43 each coordinate Zn(2+).

This sequence belongs to the universal ribosomal protein uS14 family. Zinc-binding uS14 subfamily. As to quaternary structure, part of the 30S ribosomal subunit. Contacts proteins S3 and S10. It depends on Zn(2+) as a cofactor.

Its function is as follows. Binds 16S rRNA, required for the assembly of 30S particles and may also be responsible for determining the conformation of the 16S rRNA at the A site. This Roseiflexus castenholzii (strain DSM 13941 / HLO8) protein is Small ribosomal subunit protein uS14.